We begin with the raw amino-acid sequence, 647 residues long: Glutamyl-tRNA(Gln) amidotransferase subunit B, mitochondrial (647 aa).

The disordered stretch occupies residues Q87–T106. The span at A90–K100 shows a compositional bias: basic residues.

This sequence belongs to the GatB/GatE family. GatB subfamily. As to quaternary structure, subunit of the heterotrimeric GatCAB amidotransferase (AdT) complex, composed of A, B and C subunits.

The protein resides in the mitochondrion. It carries out the reaction L-glutamyl-tRNA(Gln) + L-glutamine + ATP + H2O = L-glutaminyl-tRNA(Gln) + L-glutamate + ADP + phosphate + H(+). In terms of biological role, allows the formation of correctly charged Gln-tRNA(Gln) through the transamidation of misacylated Glu-tRNA(Gln) in the mitochondria. The reaction takes place in the presence of glutamine and ATP through an activated gamma-phospho-Glu-tRNA(Gln). In Neurospora crassa (strain ATCC 24698 / 74-OR23-1A / CBS 708.71 / DSM 1257 / FGSC 987), this protein is Glutamyl-tRNA(Gln) amidotransferase subunit B, mitochondrial.